We begin with the raw amino-acid sequence, 216 residues long: Pyridoxine/pyridoxamine 5'-phosphate oxidase (216 aa).

FMN-binding positions include 63-68, 78-79, Lys-85, and Gln-107; these read RMVLMK and YS. Lys-68 is a substrate binding site. Substrate is bound by residues Tyr-125 and Arg-129. FMN is bound by residues 142 to 143 and Trp-187; that span reads QS. Residue 193–195 coordinates substrate; sequence RLH. Arg-197 is an FMN binding site.

Belongs to the pyridoxamine 5'-phosphate oxidase family. In terms of assembly, homodimer. It depends on FMN as a cofactor.

It catalyses the reaction pyridoxamine 5'-phosphate + O2 + H2O = pyridoxal 5'-phosphate + H2O2 + NH4(+). It carries out the reaction pyridoxine 5'-phosphate + O2 = pyridoxal 5'-phosphate + H2O2. It functions in the pathway cofactor metabolism; pyridoxal 5'-phosphate salvage; pyridoxal 5'-phosphate from pyridoxamine 5'-phosphate: step 1/1. It participates in cofactor metabolism; pyridoxal 5'-phosphate salvage; pyridoxal 5'-phosphate from pyridoxine 5'-phosphate: step 1/1. Catalyzes the oxidation of either pyridoxine 5'-phosphate (PNP) or pyridoxamine 5'-phosphate (PMP) into pyridoxal 5'-phosphate (PLP). This Bradyrhizobium sp. (strain BTAi1 / ATCC BAA-1182) protein is Pyridoxine/pyridoxamine 5'-phosphate oxidase.